Reading from the N-terminus, the 540-residue chain is uncharacterized protein (540 aa).

A signal peptide spans 1 to 20 (MSVSYRGPRWSSFVHVSQHS).

The protein belongs to the TP096X family.

This is an uncharacterized protein from Treponema pallidum (strain Nichols).